Reading from the N-terminus, the 351-residue chain is Photosystem II D2 protein (351 aa).

Residues 39-59 traverse the membrane as a helical segment; it reads TAYLAIGGWLTGTTFVTSWYT. Chlorophyll a is bound at residue His116. Residues 123-139 traverse the membrane as a helical segment; the sequence is GFMLRQFEIARLVGIRP. Pheophytin a is bound by residues Gln128 and Asn141. Residues 151–164 traverse the membrane as a helical segment; that stretch reads VFVSVFLMYPLGQS. Residue His196 coordinates chlorophyll a. A helical transmembrane segment spans residues 206 to 226; it reads GALLCAIHGATVENTLFEDGE. Residues His213 and Phe260 each coordinate a plastoquinone. Position 213 (His213) interacts with Fe cation. His267 provides a ligand contact to Fe cation. Residues 277–293 traverse the membrane as a helical segment; sequence GLWTSSIGIIGLALNLR.

Belongs to the reaction center PufL/M/PsbA/D family. PSII is composed of 1 copy each of membrane proteins PsbA, PsbB, PsbC, PsbD, PsbE, PsbF, PsbH, PsbI, PsbJ, PsbK, PsbL, PsbM, PsbT, PsbX, PsbY, PsbZ, Psb30/Ycf12, peripheral proteins PsbO, CyanoQ (PsbQ), PsbU, PsbV and a large number of cofactors. It forms dimeric complexes. The D1/D2 heterodimer binds P680, chlorophylls that are the primary electron donor of PSII, and subsequent electron acceptors. It shares a non-heme iron and each subunit binds pheophytin, quinone, additional chlorophylls, carotenoids and lipids. There is also a Cl(-1) ion associated with D1 and D2, which is required for oxygen evolution. The PSII complex binds additional chlorophylls, carotenoids and specific lipids. serves as cofactor.

It is found in the cellular thylakoid membrane. It catalyses the reaction 2 a plastoquinone + 4 hnu + 2 H2O = 2 a plastoquinol + O2. In terms of biological role, photosystem II (PSII) is a light-driven water:plastoquinone oxidoreductase that uses light energy to abstract electrons from H(2)O, generating O(2) and a proton gradient subsequently used for ATP formation. It consists of a core antenna complex that captures photons, and an electron transfer chain that converts photonic excitation into a charge separation. The D1/D2 (PsbA/PsbD) reaction center heterodimer binds P680, the primary electron donor of PSII as well as several subsequent electron acceptors. D2 is needed for assembly of a stable PSII complex. This chain is Photosystem II D2 protein, found in Parasynechococcus marenigrum (strain WH8102).